Reading from the N-terminus, the 340-residue chain is Uroporphyrinogen decarboxylase (340 aa).

Substrate is bound by residues 21–25 (RQAGR), Asp71, Tyr148, Ser203, and His316.

It belongs to the uroporphyrinogen decarboxylase family. Homodimer.

The protein resides in the cytoplasm. It catalyses the reaction uroporphyrinogen III + 4 H(+) = coproporphyrinogen III + 4 CO2. The protein operates within porphyrin-containing compound metabolism; protoporphyrin-IX biosynthesis; coproporphyrinogen-III from 5-aminolevulinate: step 4/4. Functionally, catalyzes the decarboxylation of four acetate groups of uroporphyrinogen-III to yield coproporphyrinogen-III. This is Uroporphyrinogen decarboxylase from Campylobacter jejuni (strain RM1221).